The chain runs to 309 residues: Dioxygenase af480 (309 aa).

Fe cation contacts are provided by His-153, Asp-155, and His-228.

This sequence belongs to the PhyH family. Fe cation is required as a cofactor.

The enzyme catalyses 5-dehydro-6-demethoxyfumagillol + 2-oxoglutarate + O2 = 5-dehydro-6-demethoxy-6-hydroxyfumagillol + succinate + CO2. It functions in the pathway secondary metabolite biosynthesis; terpenoid biosynthesis. Functionally, dioxygenase; part of the gene cluster that mediates the biosynthesis of fumagillin, a meroterpenoid that has numerous biological activities including irreversible inhibition of human type 2 methionine aminopeptidase (METAP2). Within the pathway, the dioxygenase af480 acts as a 5-dehydro-6-demethoxyfumagillol dioxygenase that hydroylates 5-keto-demethoxyfumagillol at position C-6. The pathway begins with the conversion of farnesyl pyrophosphate (FPP) to beta-trans-bergamotene by the membrane-bound beta-trans-bergamotene synthase af520. The multifunctional cytochrome P450 monooxygenase af510 then converts beta-trans-bergamotene into 5-keto-demethoxyfumagillol via several oxydation steps. 5-keto-demethoxyfumagillol is then subjected to successive C-6 hydroxylation and O-methylation by the dioxygenase af480 and O-methyltransferase af390-400, respectively, to yield 5-keto-fumagillol, which is then stereoselectively reduced by the keto-reductase af490 to 5R-hydroxy-seco-sesquiterpene. The next step is the polyketide transferase af380-catalyzed transfer of a dodecapentaenoyl group synthesized by the polyketide synthase af370 onto 5R-hydroxy-seco-sesquiterpene which leads to the production of prefumagillin. Finally, oxidative cleavage by the monooxygenase af470 converts prefumagillin to fumagillin. In Aspergillus fumigatus (strain ATCC MYA-4609 / CBS 101355 / FGSC A1100 / Af293) (Neosartorya fumigata), this protein is Dioxygenase af480.